A 314-amino-acid chain; its full sequence is Formimidoylglutamase (314 aa).

Residues histidine 127, aspartate 151, histidine 153, aspartate 155, aspartate 239, and aspartate 241 each coordinate Mn(2+).

The protein belongs to the arginase family. Requires Mn(2+) as cofactor.

It catalyses the reaction N-formimidoyl-L-glutamate + H2O = formamide + L-glutamate. The protein operates within amino-acid degradation; L-histidine degradation into L-glutamate; L-glutamate from N-formimidoyl-L-glutamate (hydrolase route): step 1/1. In terms of biological role, catalyzes the conversion of N-formimidoyl-L-glutamate to L-glutamate and formamide. The sequence is that of Formimidoylglutamase from Corynebacterium efficiens (strain DSM 44549 / YS-314 / AJ 12310 / JCM 11189 / NBRC 100395).